The primary structure comprises 179 residues: Ubiquitin-conjugating enzyme E2 C (179 aa).

A2 bears the N-acetylalanine mark. The residue at position 3 (S3) is a Phosphoserine. The UBC core domain maps to 30 to 175 (PVGKRLQQEL…LQETYSKQVS (146 aa)). The Glycyl thioester intermediate role is filled by C114.

The protein belongs to the ubiquitin-conjugating enzyme family. As to quaternary structure, component of the APC/C complex, composed of at least 14 distinct subunits that assemble into a complex of at least 19 chains with a combined molecular mass of around 1.2 MDa. Within this complex, directly interacts with ANAPC2. Post-translationally, autoubiquitinated by the APC/C complex, leading to its degradation by the proteasome. Its degradation plays a central role in APC/C regulation, allowing cyclin-A accumulation before S phase entry. APC/C substrates inhibit the autoubiquitination of UBE2C/UBCH10 but not its E2 function, hence APC/C remaining active until its substrates have been destroyed.

The catalysed reaction is S-ubiquitinyl-[E1 ubiquitin-activating enzyme]-L-cysteine + [E2 ubiquitin-conjugating enzyme]-L-cysteine = [E1 ubiquitin-activating enzyme]-L-cysteine + S-ubiquitinyl-[E2 ubiquitin-conjugating enzyme]-L-cysteine.. The enzyme catalyses S-ubiquitinyl-[E1 ubiquitin-activating enzyme]-L-cysteine + [acceptor protein]-L-lysine = [E1 ubiquitin-activating enzyme]-L-cysteine + N(6)-monoubiquitinyl-[acceptor protein]-L-lysine.. It participates in protein modification; protein ubiquitination. Accepts ubiquitin from the E1 complex and catalyzes its covalent attachment to other proteins. In vitro catalyzes 'Lys-11'- and 'Lys-48'-linked polyubiquitination. Acts as an essential factor of the anaphase promoting complex/cyclosome (APC/C), a cell cycle-regulated ubiquitin ligase that controls progression through mitosis. Acts by initiating 'Lys-11'-linked polyubiquitin chains on APC/C substrates, leading to the degradation of APC/C substrates by the proteasome and promoting mitotic exit. This Mus musculus (Mouse) protein is Ubiquitin-conjugating enzyme E2 C (Ube2c).